A 222-amino-acid chain; its full sequence is UPF0502 protein PBPRB0676 (222 aa).

Belongs to the UPF0502 family.

The chain is UPF0502 protein PBPRB0676 from Photobacterium profundum (strain SS9).